We begin with the raw amino-acid sequence, 238 residues long: TPGSQPQPMDLRVGQRPTVEPPPEPALLTLQHPQRLHRHLFLAGLQQQQRSAEPMRLSMDPPLPELQGGQQEQELRQLLNKDKSKRSAVASSVVKQKLAEVILKKQQAALERTVHPSSPSIPYRTLEPLDTEGAARSVLSSFLPPVPSLPTEPPEHFPLRKTVSEPNLKLRYKPKKSLERRKNPLLRKESAPPSLRRRPAETLGDSSPSSSSTPASGCSSPNDSEHGPNPALGSEADG.

2 disordered regions span residues 1 to 26 (TPGS…PEPA) and 47 to 72 (QQQR…GQQE). The interval 58-158 (SMDPPLPELQ…LPTEPPEHFP (101 aa)) is interaction with MEF2A. 2 positions are modified to phosphoserine: Ser118 and Ser164. Residues 145 to 238 (PVPSLPTEPP…NPALGSEADG (94 aa)) are disordered. Basic and acidic residues predominate over residues 176 to 190 (KSLERRKNPLLRKES). Ser190 carries the phosphoserine; by PKD/PRKD2 modification. Residues 206–221 (SSPSSSSTPASGCSSP) are compositionally biased toward low complexity.

This sequence belongs to the histone deacetylase family. HD type 2 subfamily. Interacts with HDAC1, HDAC2, HDAC3, HDAC4, HDAC5, NCOR1, NCOR2, SIN3A, SIN3B, RBBP4, RBBP7, MTA1L1, SAP30 and MBD3. Interacts with KAT5 and EDNRA. Interacts with the 14-3-3 protein YWHAE, MEF2A, MEF2B and MEF2C. Interacts with ZMYND15. Interacts with KDM5B. Interacts with PML. Interacts with FOXP3. Interacts with RARA. In terms of processing, may be phosphorylated by CaMK1. Phosphorylated by the PKC kinases PKN1 and PKN2, impairing nuclear import. Phosphorylation at Ser-164 by MARK2, MARK3 and PRKD1 promotes interaction with 14-3-3 proteins and export from the nucleus. Phosphorylation at Ser-164 is a prerequisite for phosphorylation at Ser-190.

It localises to the nucleus. The protein localises to the cytoplasm. The enzyme catalyses N(6)-acetyl-L-lysyl-[histone] + H2O = L-lysyl-[histone] + acetate. It carries out the reaction N(6)-acetyl-L-lysyl-[protein] + H2O = L-lysyl-[protein] + acetate. Its function is as follows. Responsible for the deacetylation of lysine residues on the N-terminal part of the core histones (H2A, H2B, H3 and H4). Histone deacetylation gives a tag for epigenetic repression and plays an important role in transcriptional regulation, cell cycle progression and developmental events. Histone deacetylases act via the formation of large multiprotein complexes. Involved in muscle maturation by repressing transcription of myocyte enhancer factors such as MEF2A, MEF2B and MEF2C. During muscle differentiation, it shuttles into the cytoplasm, allowing the expression of myocyte enhancer factors. May be involved in Epstein-Barr virus (EBV) latency, possibly by repressing the viral BZLF1 gene. Positively regulates the transcriptional repressor activity of FOXP3. Serves as a corepressor of RARA, causing its deacetylation and inhibition of RARE DNA element binding. In association with RARA, plays a role in the repression of microRNA-10a and thereby in the inflammatory response. Also acetylates non-histone proteins, such as ALKBH5. The polypeptide is Histone deacetylase 7 (Hdac7) (Rattus norvegicus (Rat)).